Consider the following 291-residue polypeptide: ATP synthase gamma chain (291 aa).

It belongs to the ATPase gamma chain family. In terms of assembly, F-type ATPases have 2 components, CF(1) - the catalytic core - and CF(0) - the membrane proton channel. CF(1) has five subunits: alpha(3), beta(3), gamma(1), delta(1), epsilon(1). CF(0) has three main subunits: a, b and c.

It is found in the cell membrane. Produces ATP from ADP in the presence of a proton gradient across the membrane. The gamma chain is believed to be important in regulating ATPase activity and the flow of protons through the CF(0) complex. In Streptococcus pyogenes serotype M49 (strain NZ131), this protein is ATP synthase gamma chain.